The sequence spans 362 residues: Peptide chain release factor 1 (362 aa).

The residue at position 237 (Gln237) is an N5-methylglutamine. The disordered stretch occupies residues 279 to 305; the sequence is RLQQAEDEKRRSEEESSRRNLVASGDR. The segment covering 282-296 has biased composition (basic and acidic residues); that stretch reads QAEDEKRRSEEESSR.

It belongs to the prokaryotic/mitochondrial release factor family. Methylated by PrmC. Methylation increases the termination efficiency of RF1.

The protein resides in the cytoplasm. Functionally, peptide chain release factor 1 directs the termination of translation in response to the peptide chain termination codons UAG and UAA. This Colwellia psychrerythraea (strain 34H / ATCC BAA-681) (Vibrio psychroerythus) protein is Peptide chain release factor 1.